The primary structure comprises 316 residues: 4-hydroxyphenylacetate decarboxylase activating enzyme (316 aa).

Residues H20–A307 form the Radical SAM core domain. [4Fe-4S] cluster contacts are provided by C34, C38, C41, C60, C66, C69, and C105. W40–A42 contributes to the S-adenosyl-L-methionine binding site. The 4Fe-4S ferredoxin-type domain maps to N84–K115. S-adenosyl-L-methionine-binding positions include G144, D193 to K195, and H267.

Belongs to the organic radical-activating enzymes family. In terms of assembly, monomer. [4Fe-4S] cluster serves as cofactor.

The enzyme catalyses glycyl-[protein] + reduced [flavodoxin] + S-adenosyl-L-methionine = glycin-2-yl radical-[protein] + semiquinone [flavodoxin] + 5'-deoxyadenosine + L-methionine + H(+). Functionally, catalyzes activation of 4-hydroxyphenylacetate decarboxylase under anaerobic conditions by generation of an organic free radical on a glycine residue, via a homolytic cleavage of S-adenosyl-L-methionine (SAM). This is 4-hydroxyphenylacetate decarboxylase activating enzyme from Clostridioides difficile (strain CD196) (Peptoclostridium difficile).